Consider the following 393-residue polypeptide: MAKIMIPASKQPVYKKLGLLLVAVFTVYVFFHGAQYARGSAPSPKYSTVLSSGSGYKYSKVELPKYTGPREKATFVTLVRNRDLYSLAESIKSVEDRFNSKFNYDWVFLNDEEFTDEFKNVTSALVSGTTKYGVIPKEHWSFPEWIDEEKAAQVRKEMGEKRIIYGDSISYRHMCRFESGFFYRHPLMDDYDWYWRVEPDIKLHCDIDYDVFKFMKDNKKKYAFAISIKEYEATIPTLWETTRKFMEAHPELIHENNMLDFVSDDQGLSYNLCHFWSNFEIAALDLWRSPAYSAYFDYLDREGGFFYERWGDAPVHSIGAALFLDRSEIHHFGDIGYYHVPFHSCPIDTSIRLANKCDCDPSKDFTWHSYSCTTKFYNINKLPKPAGWQNHIG.

Over 1–16 (MAKIMIPASKQPVYKK) the chain is Cytoplasmic. Residues 17–34 (LGLLLVAVFTVYVFFHGA) traverse the membrane as a helical; Signal-anchor for type II membrane protein segment. The segment at 35 to 68 (QYARGSAPSPKYSTVLSSGSGYKYSKVELPKYTG) is stem region. Residues 35-393 (QYARGSAPSP…KPAGWQNHIG (359 aa)) lie on the Lumenal side of the membrane. The tract at residues 69–393 (PREKATFVTL…KPAGWQNHIG (325 aa)) is catalytic. An N-linked (GlcNAc...) asparagine glycan is attached at N120. E280 functions as the Nucleophile in the catalytic mechanism.

This sequence belongs to the glycosyltransferase 15 family. The cofactor is Mn(2+). Post-translationally, N-glycosylated.

The protein localises to the golgi apparatus membrane. The protein operates within protein modification; protein glycosylation. Its function is as follows. Mannosyltransferase that transfers a mannose residue from GDP-mannose to a range of acceptors in vitro, forming an alpha-(1-&gt;2)-D-mannosyl-D-mannose linkage. This chain is Alpha-1,2 mannosyltransferase KTR1 (KTR1), found in Saccharomyces cerevisiae (strain ATCC 204508 / S288c) (Baker's yeast).